Reading from the N-terminus, the 414-residue chain is Esterase FrsA (414 aa).

This sequence belongs to the FrsA family.

It carries out the reaction a carboxylic ester + H2O = an alcohol + a carboxylate + H(+). Functionally, catalyzes the hydrolysis of esters. The chain is Esterase FrsA from Shigella flexneri serotype 5b (strain 8401).